A 427-amino-acid polypeptide reads, in one-letter code: Membrane-bound hydrogenase subunit alpha (427 aa).

Ni(2+) is bound by residues Cys-68, Cys-71, Cys-374, and Cys-377.

It belongs to the complex I 49 kDa subunit family. In terms of assembly, the membrane-bound hydrogenase complex is composed of MbhK and MbhL, and may also contain MbhJ. Ni(2+) is required as a cofactor.

The protein localises to the cell membrane. The enzyme catalyses H2 + 2 oxidized [2Fe-2S]-[ferredoxin] = 2 reduced [2Fe-2S]-[ferredoxin] + 2 H(+). With respect to regulation, inhibited by 0.1 mM Cu(2+). In terms of biological role, alpha subunit of a hydrogen-evolving hydrogenase that utilizes protons both as a substrate for hydrogen production and proton translocation. Acts by coupling the redox reaction via ferredoxin and iron-sulfur (Fe-S) clusters to proton translocation across the membrane thereby conserving the redox energy in a proton gradient. This Pyrococcus furiosus (strain ATCC 43587 / DSM 3638 / JCM 8422 / Vc1) protein is Membrane-bound hydrogenase subunit alpha.